We begin with the raw amino-acid sequence, 305 residues long: Acetyl-coenzyme A carboxylase carboxyl transferase subunit beta (305 aa).

The region spanning 27–296 (LWVKCSSCRE…SPAKAELAGR (270 aa)) is the CoA carboxyltransferase N-terminal domain. Residues cysteine 31, cysteine 34, cysteine 50, and cysteine 53 each coordinate Zn(2+). The segment at 31–53 (CSSCRELIYKKQLNDNLKVCPKC) adopts a C4-type zinc-finger fold.

This sequence belongs to the AccD/PCCB family. Acetyl-CoA carboxylase is a heterohexamer composed of biotin carboxyl carrier protein (AccB), biotin carboxylase (AccC) and two subunits each of ACCase subunit alpha (AccA) and ACCase subunit beta (AccD). It depends on Zn(2+) as a cofactor.

It localises to the cytoplasm. It catalyses the reaction N(6)-carboxybiotinyl-L-lysyl-[protein] + acetyl-CoA = N(6)-biotinyl-L-lysyl-[protein] + malonyl-CoA. The protein operates within lipid metabolism; malonyl-CoA biosynthesis; malonyl-CoA from acetyl-CoA: step 1/1. Functionally, component of the acetyl coenzyme A carboxylase (ACC) complex. Biotin carboxylase (BC) catalyzes the carboxylation of biotin on its carrier protein (BCCP) and then the CO(2) group is transferred by the transcarboxylase to acetyl-CoA to form malonyl-CoA. The sequence is that of Acetyl-coenzyme A carboxylase carboxyl transferase subunit beta from Chloroflexus aurantiacus (strain ATCC 29366 / DSM 635 / J-10-fl).